The sequence spans 629 residues: tRNA uridine 5-carboxymethylaminomethyl modification enzyme MnmG (629 aa).

Residues 13–18, V125, and S180 each bind FAD; that span reads GGGHAG. An NAD(+)-binding site is contributed by 273–287; sequence GPRYCPSIEDKVMRF. Position 370 (Q370) interacts with FAD.

The protein belongs to the MnmG family. Homodimer. Heterotetramer of two MnmE and two MnmG subunits. The cofactor is FAD.

The protein resides in the cytoplasm. NAD-binding protein involved in the addition of a carboxymethylaminomethyl (cmnm) group at the wobble position (U34) of certain tRNAs, forming tRNA-cmnm(5)s(2)U34. The sequence is that of tRNA uridine 5-carboxymethylaminomethyl modification enzyme MnmG from Salmonella arizonae (strain ATCC BAA-731 / CDC346-86 / RSK2980).